Consider the following 89-residue polypeptide: Cytochrome b (89 aa).

2 consecutive transmembrane segments (helical) span residues 38 to 58 (FGPL…FLAM) and 82 to 89 (WLLRYMHA). His88 provides a ligand contact to heme b.

This sequence belongs to the cytochrome b family. The main subunits of complex b-c1 are: cytochrome b, cytochrome c1 and the Rieske protein. Heme b serves as cofactor.

The protein resides in the mitochondrion inner membrane. Component of the ubiquinol-cytochrome c reductase complex (complex III or cytochrome b-c1 complex) that is part of the mitochondrial respiratory chain. The b-c1 complex mediates electron transfer from ubiquinol to cytochrome c. Contributes to the generation of a proton gradient across the mitochondrial membrane that is then used for ATP synthesis. This Brassica napus (Rape) protein is Cytochrome b (MT-CYB).